Reading from the N-terminus, the 475-residue chain is CAAX prenyl protease 1 homolog (475 aa).

At 1-18 the chain is on the lumenal side; that stretch reads MGMWASLDALWEMPAEKR. The helical transmembrane segment at 19–39 threads the bilayer; it reads IFGAVLLFSWTVYLWETFLAQ. Residues 40–81 are Nuclear-facing; that stretch reads RQRRIYKTTTHVPPELGQIMDSETFEKSRLYQLDKSTFSFWS. Residues 82 to 102 traverse the membrane as a helical segment; sequence GLYSETEGTLILLFGGIPYLW. The Lumenal portion of the chain corresponds to 103–123; it reads RLSGRFCGYAGFGPEYEITQS. The helical transmembrane segment at 124-144 threads the bilayer; the sequence is LVFLLLATLFSALTGLPWSLY. Residues 145 to 170 lie on the Nuclear side of the membrane; the sequence is NTFVIEEKHGFNQQTLGFFMKDAIKK. Residues 171 to 191 traverse the membrane as a helical segment; sequence FVVTQCILLPVSSLLLYIIKI. The Lumenal segment spans residues 192–195; the sequence is GGDY. A helical transmembrane segment spans residues 196 to 216; sequence FFIYAWLFTLVVSLVLVTIYA. The Nuclear portion of the chain corresponds to 217–347; that stretch reads DYIAPLFDKF…GHWKLGHTVK (131 aa). Histidine 335 lines the Zn(2+) pocket. Residue glutamate 336 is part of the active site. Histidine 339 serves as a coordination point for Zn(2+). The chain crosses the membrane as a helical span at residues 348-368; it reads NIIISQMNSFLCFFLFAVLIG. At 369 to 382 the chain is on the lumenal side; it reads RKELFAAFGFYDSQ. A helical transmembrane segment spans residues 383-405; it reads PTLIGLLIIFQFIFSPYNEVLSF. At 406 to 475 the chain is on the nuclear side; it reads CLTVLSRRFE…LQALKTMKQH (70 aa). Zn(2+) is bound at residue glutamate 415.

It belongs to the peptidase M48A family. Zn(2+) serves as cofactor. As to expression, widely expressed. High levels in kidney, prostate, testis and ovary.

It is found in the endoplasmic reticulum membrane. The protein localises to the nucleus inner membrane. The protein resides in the early endosome membrane. Its subcellular location is the late endosome membrane. The enzyme catalyses Hydrolyzes the peptide bond -P2-(S-farnesyl or geranylgeranyl)C-P1'-P2'-P3'-COOH where P1' and P2' are amino acids with aliphatic side chains and P3' is any C-terminal residue.. Transmembrane metalloprotease whose catalytic activity is critical for processing lamin A/LMNA on the inner nuclear membrane and clearing clogged translocons on the endoplasmic reticulum. Proteolytically removes the C-terminal three residues of farnesylated proteins. Also plays an antiviral role independently of its protease activity by restricting enveloped RNA and DNA viruses, including influenza A, Zika, Ebola, Sindbis, vesicular stomatitis, cowpox, and vaccinia. Mechanistically, controls IFITM antiviral pathway to hinder viruses from breaching the endosomal barrier by modulating membrane fluidity. The protein is CAAX prenyl protease 1 homolog of Homo sapiens (Human).